The sequence spans 89 residues: Small ribosomal subunit protein uS15 (89 aa).

Belongs to the universal ribosomal protein uS15 family. As to quaternary structure, part of the 30S ribosomal subunit. Forms a bridge to the 50S subunit in the 70S ribosome, contacting the 23S rRNA.

In terms of biological role, one of the primary rRNA binding proteins, it binds directly to 16S rRNA where it helps nucleate assembly of the platform of the 30S subunit by binding and bridging several RNA helices of the 16S rRNA. Functionally, forms an intersubunit bridge (bridge B4) with the 23S rRNA of the 50S subunit in the ribosome. The sequence is that of Small ribosomal subunit protein uS15 from Trichormus variabilis (strain ATCC 29413 / PCC 7937) (Anabaena variabilis).